Here is a 166-residue protein sequence, read N- to C-terminus: PTS system glucose-specific EIIA component (166 aa).

A PTS EIIA type-1 domain is found at 34-138 (DPVFAQKMMG…SVISPIIITN (105 aa)). Zn(2+) contacts are provided by H71 and H86. The active-site Tele-phosphohistidine intermediate; for EIIA activity is H86. A Phosphohistidine; by HPr modification is found at H86.

Heterodimer with glycerol kinase (glpk). The cofactor is Zn(2+).

The protein localises to the cytoplasm. The phosphoenolpyruvate-dependent sugar phosphotransferase system (sugar PTS), a major carbohydrate active transport system, catalyzes the phosphorylation of incoming sugar substrates concomitantly with their translocation across the cell membrane. The enzyme II complex composed of PtsG and Crr is involved in glucose transport. This Staphylococcus aureus (strain COL) protein is PTS system glucose-specific EIIA component (crr).